A 210-amino-acid chain; its full sequence is Ribosomal RNA small subunit methyltransferase G (210 aa).

S-adenosyl-L-methionine-binding positions include Gly80, Leu85, 131 to 132 (VE), and Arg146.

Belongs to the methyltransferase superfamily. RNA methyltransferase RsmG family.

Its subcellular location is the cytoplasm. The catalysed reaction is guanosine(527) in 16S rRNA + S-adenosyl-L-methionine = N(7)-methylguanosine(527) in 16S rRNA + S-adenosyl-L-homocysteine. Its function is as follows. Specifically methylates the N7 position of guanine in position 527 of 16S rRNA. The sequence is that of Ribosomal RNA small subunit methyltransferase G from Pasteurella multocida (strain Pm70).